The following is a 573-amino-acid chain: NEDD4-binding protein 3-A (573 aa).

Disordered regions lie at residues 168 to 216 (LNTM…INSL) and 382 to 407 (LRGESEELRQKQSQSDNSGPKLEDSK). 2 stretches are compositionally biased toward polar residues: residues 184-196 (QPSNSHSNNQSES) and 207-216 (DSRQNSINSL). The stretch at 289–539 (VEDVARQLEE…KEIQSSYREM (251 aa)) forms a coiled coil.

Belongs to the N4BP3 family.

The protein resides in the cytoplasmic vesicle. It localises to the cell projection. It is found in the axon. Its subcellular location is the dendrite. Plays a role in axon and dendrite arborization during cranial nerve development. Also important for neural crest migration and early development of other anterior structures including eye, brain and cranial cartilage. The sequence is that of NEDD4-binding protein 3-A from Xenopus laevis (African clawed frog).